Here is a 119-residue protein sequence, read N- to C-terminus: Basic phospholipase A2 acanthin-1 (119 aa).

Intrachain disulfides connect Cys-11–Cys-71, Cys-27–Cys-118, Cys-29–Cys-45, Cys-44–Cys-99, Cys-51–Cys-92, Cys-60–Cys-85, and Cys-78–Cys-90. Ca(2+)-binding residues include Tyr-28, Gly-30, and Gly-32. Residue His-48 is part of the active site. Asp-49 contacts Ca(2+). Asp-93 is a catalytic residue.

Ca(2+) is required as a cofactor. As to expression, expressed by the venom gland.

The protein resides in the secreted. It catalyses the reaction a 1,2-diacyl-sn-glycero-3-phosphocholine + H2O = a 1-acyl-sn-glycero-3-phosphocholine + a fatty acid + H(+). Its function is as follows. Snake venom phospholipase A2 (PLA2) that potently inhibits ADP-(IC(50)=10 nM) and collagen-induced (IC(50)=7 nM) platelet aggregation when tested on human whole blood. PLA2 catalyzes the calcium-dependent hydrolysis of the 2-acyl groups in 3-sn-phosphoglycerides. This chain is Basic phospholipase A2 acanthin-1, found in Acanthophis antarcticus (Common death adder).